The following is a 148-amino-acid chain: Large ribosomal subunit protein bL9 (148 aa).

This sequence belongs to the bacterial ribosomal protein bL9 family.

In terms of biological role, binds to the 23S rRNA. The protein is Large ribosomal subunit protein bL9 of Acidithiobacillus ferrooxidans (strain ATCC 23270 / DSM 14882 / CIP 104768 / NCIMB 8455) (Ferrobacillus ferrooxidans (strain ATCC 23270)).